The sequence spans 350 residues: Renin receptor (350 aa).

Positions 1-16 are cleaved as a signal peptide; that stretch reads MAVFVVLLALVAGVLG. Residues 17–302 are Extracellular-facing; sequence NEFSILKSPG…YNLAYKYNFE (286 aa). A helical membrane pass occupies residues 303 to 323; that stretch reads YSVVFNMVLWIMIALALAVII. Topologically, residues 324–350 are cytoplasmic; sequence TSYNIWNMDPGYDSIIYRMTNQKIRMD. The Mediates retrograde transport to the ER signature appears at 346 to 350; that stretch reads KIRMD.

As to quaternary structure, interacts with renin. Accessory component of the multisubunit proton-transporting vacuolar (V)-ATPase protein pump. Interacts (via N-terminus) with ATP6AP1 (via N-terminus). Interacts with ATP6V0D1; ATP6V0D1 is a V-ATPase complex subunit and the interaction promotes V-ATPase complex assembly. Interacts with TMEM9; TMEM9 is a V-ATPase assembly regulator and the interaction induces the interaction with ATP6V0D1. Interacts with VMA21 (via N-terminus); VMA21 is a V-ATPase accessory component. Post-translationally, phosphorylated. Proteolytically cleaved by a furin-like convertase in the trans-Golgi network to generate N- and C-terminal fragments. In terms of tissue distribution, expressed in brain, heart, placenta, liver, kidney and pancreas. Barely detectable in lung and skeletal muscles. In the kidney cortex it is restricted to the mesangium of glomeruli. In the coronary and kidney artery it is expressed in the subendothelium, associated to smooth muscles where it colocalizes with REN. Expressed in vascular structures and by syncytiotrophoblast cells in the mature fetal placenta.

Its subcellular location is the endoplasmic reticulum membrane. It localises to the lysosome membrane. The protein localises to the cytoplasmic vesicle. It is found in the autophagosome membrane. The protein resides in the cell projection. Its subcellular location is the dendritic spine membrane. It localises to the axon. The protein localises to the endosome membrane. It is found in the clathrin-coated vesicle membrane. The protein resides in the secretory vesicle. Its subcellular location is the synaptic vesicle membrane. In terms of biological role, multifunctional protein which functions as a renin, prorenin cellular receptor and is involved in the assembly of the lysosomal proton-transporting V-type ATPase (V-ATPase) and the acidification of the endo-lysosomal system. May mediate renin-dependent cellular responses by activating ERK1 and ERK2. By increasing the catalytic efficiency of renin in AGT/angiotensinogen conversion to angiotensin I, may also play a role in the renin-angiotensin system (RAS). Through its function in V-type ATPase (v-ATPase) assembly and acidification of the lysosome it regulates protein degradation and may control different signaling pathways important for proper brain development, synapse morphology and synaptic transmission. The protein is Renin receptor of Homo sapiens (Human).